The chain runs to 116 residues: MRHRRRTPHLNKPADQRKALMRALTTALLREGRITTTKARAKAIRATTEKMITLAKDGSLAARRQALAYIYDKELVRSLFEQAPERYRDRPGGYTRILRTVRRRGDGAEMAVIELV.

It belongs to the bacterial ribosomal protein bL17 family. Part of the 50S ribosomal subunit. Contacts protein L32.

The sequence is that of Large ribosomal subunit protein bL17 from Synechococcus sp. (strain JA-3-3Ab) (Cyanobacteria bacterium Yellowstone A-Prime).